The sequence spans 427 residues: MTRTNSDFLSSTDPAIAELINDELQRQRDHLELIASENFTSAAVLAAQGSVLTNKYAEGLPGKRYYGGCEYIDKIEQLAINRAKQIFGAAHANVQPHSGAQANFAVFLSLLQPGDKIMGMDLSHGGHLTHGSPVNVSGKWFQVSHYGVSQQTEQLDYDQIRELALRERPKLLICGYSAYPRIIDFEKFRSIADEVGAYLLADIAHIAGLVASGLHPDPIPHCHVVTTTTHKTLRGPRGGLILTSDAELGKKLDKSVFPGTQGGPLEHVIAGKAVAFGEALKPEFKTYSAQVIENARALAEQLQNRGLKLVSNGTDNHLLLVDLRSVNLTGKQADQLVSTVNITANKNTIPFDPQSPFVTSGLRLGSPAMTTRGLGVAEFTEIANIISDRLLSPDSDVVTQDCRQRVAALCDRFPLYPHLEIPVPALA.

(6S)-5,6,7,8-tetrahydrofolate is bound by residues L122 and G126–L128. An N6-(pyridoxal phosphate)lysine modification is found at K231. S355–F357 contributes to the (6S)-5,6,7,8-tetrahydrofolate binding site.

This sequence belongs to the SHMT family. In terms of assembly, homodimer. The cofactor is pyridoxal 5'-phosphate.

It is found in the cytoplasm. The enzyme catalyses (6R)-5,10-methylene-5,6,7,8-tetrahydrofolate + glycine + H2O = (6S)-5,6,7,8-tetrahydrofolate + L-serine. The protein operates within one-carbon metabolism; tetrahydrofolate interconversion. It functions in the pathway amino-acid biosynthesis; glycine biosynthesis; glycine from L-serine: step 1/1. In terms of biological role, catalyzes the reversible interconversion of serine and glycine with tetrahydrofolate (THF) serving as the one-carbon carrier. This reaction serves as the major source of one-carbon groups required for the biosynthesis of purines, thymidylate, methionine, and other important biomolecules. Also exhibits THF-independent aldolase activity toward beta-hydroxyamino acids, producing glycine and aldehydes, via a retro-aldol mechanism. The sequence is that of Serine hydroxymethyltransferase from Nostoc punctiforme (strain ATCC 29133 / PCC 73102).